The chain runs to 259 residues: UPF0246 protein VF_2109 (259 aa).

This sequence belongs to the UPF0246 family.

The polypeptide is UPF0246 protein VF_2109 (Aliivibrio fischeri (strain ATCC 700601 / ES114) (Vibrio fischeri)).